The sequence spans 691 residues: Protein vreteno (691 aa).

The disordered stretch occupies residues Gln-128 to Glu-155. Tudor domains lie at Lys-366–Leu-427 and Ala-573–Pro-630.

In terms of assembly, interacts with aub and piwi. As to expression, gonad-specific.

The protein localises to the cytoplasm. It is found in the cytoplasmic ribonucleoprotein granule. Functionally, gonad-specific protein essential for germline development to repress transposable elements and preventing their mobilization, which is essential for the germline integrity. Acts via the piRNA metabolic process in both germline and somatic gonadal tissues by mediating the repression of transposable elements during meiosis. Required for primary piRNA biogenesis in both germline and somatic gonadal tissues. The polypeptide is Protein vreteno (vret) (Drosophila melanogaster (Fruit fly)).